The primary structure comprises 356 residues: D-alanine--D-alanine ligase (356 aa).

The region spanning 134-339 is the ATP-grasp domain; that stretch reads KQLFATRGLP…YSELITDLIN (206 aa). 167 to 222 lines the ATP pocket; that stretch reads EGKLTYPVFVKPANLGSSVGISKCTDSETLIHGIEEALQFDRKLVIEQGVNAREVE. D293, E306, and N308 together coordinate Mg(2+).

This sequence belongs to the D-alanine--D-alanine ligase family. Mg(2+) serves as cofactor. The cofactor is Mn(2+).

The protein localises to the cytoplasm. The enzyme catalyses 2 D-alanine + ATP = D-alanyl-D-alanine + ADP + phosphate + H(+). Its pathway is cell wall biogenesis; peptidoglycan biosynthesis. Functionally, cell wall formation. The polypeptide is D-alanine--D-alanine ligase (Macrococcus caseolyticus (strain JCSC5402) (Macrococcoides caseolyticum)).